Here is a 35-residue protein sequence, read N- to C-terminus: 30 kDa neutral phosphatase (35 aa).

A compositionally biased stretch (polar residues) spans 1–28; that stretch reads KSSAEVQQTQQASIPASQKANLGNQNNI. The disordered stretch occupies residues 1-35; that stretch reads KSSAEVQQTQQASIPASQKANLGNQNNIMXVAXYQ.

Highly cationic enzyme that can bind human or rat immunoglobulins as well as serum albumin, and could therefore be involved in post-infectious sequelae. This chain is 30 kDa neutral phosphatase, found in Staphylococcus aureus.